The following is a 388-amino-acid chain: MWFGKFGGQYVPETLMEPLRELEKAYKRLKNDEEFNRQLDYYLRTWAGRPTPLYYAERLTKKVGGAKIYLKREDLLHGGAHKTNNAIGQALLAKFMGKTRLIAETGAGQHGVATAMAGALLGMKVDIYMGAEDVERQKMNVFRMKLLGANVIPVHTGSKTLKDAINEALRDWVATFEYSHYLIGSVVGPHPYPIIVRDFQSVIGREAREQILEAEGDLPDVIVACVGGGSNAMGIFYPFVKDKSVRLIGVEAGGKGIESGKHSASLNAGEIGVFHGMLSYFLQDEEGQIRTTHSIAPGLDYPGVGPEHAYLKESGRAEYVTVTDEEALRAFHELSRTEGIIPALESAHAVAYAIKLAREMSRDDVIIVNLSGRGDKDLDIVLKVSGNV.

Position 82 is an N6-(pyridoxal phosphate)lysine (lysine 82).

This sequence belongs to the TrpB family. Tetramer of two alpha and two beta chains. The cofactor is pyridoxal 5'-phosphate.

It catalyses the reaction (1S,2R)-1-C-(indol-3-yl)glycerol 3-phosphate + L-serine = D-glyceraldehyde 3-phosphate + L-tryptophan + H2O. It participates in amino-acid biosynthesis; L-tryptophan biosynthesis; L-tryptophan from chorismate: step 5/5. Functionally, the beta subunit is responsible for the synthesis of L-tryptophan from indole and L-serine. This Pyrococcus abyssi (strain GE5 / Orsay) protein is Tryptophan synthase beta chain 1 (trpB1).